We begin with the raw amino-acid sequence, 101 residues long: Small ribosomal subunit protein uS14 (101 aa).

Residues 53 to 72 (RDAAAVRVRNRDSHDGRPRG) are disordered. A compositionally biased stretch (basic and acidic residues) spans 61 to 70 (RNRDSHDGRP).

The protein belongs to the universal ribosomal protein uS14 family. As to quaternary structure, part of the 30S ribosomal subunit. Contacts proteins S3 and S10.

Functionally, binds 16S rRNA, required for the assembly of 30S particles and may also be responsible for determining the conformation of the 16S rRNA at the A site. In Corynebacterium glutamicum (strain R), this protein is Small ribosomal subunit protein uS14.